We begin with the raw amino-acid sequence, 208 residues long: Ribosome maturation factor RimP (208 aa).

The segment at 189 to 208 (EAPETGATTMARDGSEEETK) is disordered.

The protein belongs to the RimP family.

It is found in the cytoplasm. In terms of biological role, required for maturation of 30S ribosomal subunits. The protein is Ribosome maturation factor RimP of Ruegeria pomeroyi (strain ATCC 700808 / DSM 15171 / DSS-3) (Silicibacter pomeroyi).